The primary structure comprises 369 residues: S-(hydroxymethyl)glutathione dehydrogenase (369 aa).

Zn(2+)-binding residues include Cys-40, His-62, Cys-92, Cys-95, Cys-98, Cys-106, and Cys-169.

This sequence belongs to the zinc-containing alcohol dehydrogenase family. Class-III subfamily. In terms of assembly, homodimer. Zn(2+) is required as a cofactor.

Its subcellular location is the cytoplasm. The catalysed reaction is S-(hydroxymethyl)glutathione + NADP(+) = S-formylglutathione + NADPH + H(+). It carries out the reaction S-(hydroxymethyl)glutathione + NAD(+) = S-formylglutathione + NADH + H(+). It catalyses the reaction a primary alcohol + NAD(+) = an aldehyde + NADH + H(+). The enzyme catalyses a secondary alcohol + NAD(+) = a ketone + NADH + H(+). The catalysed reaction is S-nitrosoglutathione + NADH + H(+) = S-(hydroxysulfenamide)glutathione + NAD(+). Functionally, has high formaldehyde dehydrogenase activity in the presence of glutathione and catalyzes the oxidation of normal alcohols in a reaction that is not GSH-dependent. In addition, hemithiolacetals other than those formed from GSH, including omega-thiol fatty acids, also are substrates. Also acts as a S-nitroso-glutathione reductase by catalyzing the NADH-dependent reduction of S-nitrosoglutathione. This Escherichia coli (strain SMS-3-5 / SECEC) protein is S-(hydroxymethyl)glutathione dehydrogenase (frmA).